The following is a 196-amino-acid chain: Transcriptional regulatory protein UhpA (196 aa).

One can recognise a Response regulatory domain in the interval 3–116 (TVALIDDHLI…ELIAAVHTVA (114 aa)). D54 is modified (4-aspartylphosphate). One can recognise an HTH luxR-type domain in the interval 131–196 (AAGRQDPLTK…ELAHRMFDGW (66 aa)). Residues 155–174 (VKEIAAELGLSPKTVHVHRA) constitute a DNA-binding region (H-T-H motif).

Phosphorylated and dephosphorylated by UhpB.

It is found in the cytoplasm. Part of the UhpABC signaling cascade that controls the expression of the hexose phosphate transporter UhpT. Activates the transcription of the uhpT gene. Acts by binding specifically to the uhpT promoter region. The protein is Transcriptional regulatory protein UhpA (uhpA) of Salmonella typhimurium (strain LT2 / SGSC1412 / ATCC 700720).